Reading from the N-terminus, the 286-residue chain is Bifunctional protein FolD (286 aa).

NADP(+) is bound at residue Gly-166–Ser-168.

It belongs to the tetrahydrofolate dehydrogenase/cyclohydrolase family. In terms of assembly, homodimer.

The catalysed reaction is (6R)-5,10-methylene-5,6,7,8-tetrahydrofolate + NADP(+) = (6R)-5,10-methenyltetrahydrofolate + NADPH. The enzyme catalyses (6R)-5,10-methenyltetrahydrofolate + H2O = (6R)-10-formyltetrahydrofolate + H(+). Its pathway is one-carbon metabolism; tetrahydrofolate interconversion. Functionally, catalyzes the oxidation of 5,10-methylenetetrahydrofolate to 5,10-methenyltetrahydrofolate and then the hydrolysis of 5,10-methenyltetrahydrofolate to 10-formyltetrahydrofolate. In Idiomarina loihiensis (strain ATCC BAA-735 / DSM 15497 / L2-TR), this protein is Bifunctional protein FolD.